We begin with the raw amino-acid sequence, 356 residues long: MLGKTVLLPLLVLLCHSLASASLVYRGADISSLLIEEKAGIEYKNVNGQTQPLENILKANGVNSVRQRVWVNPSDGSYNLDYNVKLAKRVKAAGMSVYLDLHFSDTWADPSHQTTPRGWSTNDIGTLTWQVYNYTMEVCNTFASNGIDVSIVAIGNEIRNGLLWPLGKPDNYANIANILHSAAFGVKDSTLSPKPKIMIHLDNGWDWSAQKFFYNRVLSSGANLVKSDFDLIGVSYYPFYNPSATLSALTTSLKNLRSTYGKDVLVVETDWPVSCPNPAYAFPSDLKDIPFSVAGQTTFVQRVANIVAQTPGGIGLYYWEPAWVQNAALGSSCADNLMVDWSTRQARTSLSVFATI.

A signal peptide spans 1–21; it reads MLGKTVLLPLLVLLCHSLASA. Asn-133 carries an N-linked (GlcNAc...) asparagine glycan. Glu-157 serves as the catalytic Proton donor. Glu-268 functions as the Nucleophile in the catalytic mechanism.

It belongs to the glycosyl hydrolase 53 family.

The protein localises to the secreted. The catalysed reaction is The enzyme specifically hydrolyzes (1-&gt;4)-beta-D-galactosidic linkages in type I arabinogalactans.. Endogalactanase involved in the degradation of plant cell wall polysaccharides, and more particularly of hairy regions of pectin. The chain is Probable arabinogalactan endo-beta-1,4-galactanase A (galA) from Aspergillus fumigatus (strain ATCC MYA-4609 / CBS 101355 / FGSC A1100 / Af293) (Neosartorya fumigata).